A 269-amino-acid chain; its full sequence is MEKQKKSINIYILSDSVGDTGDQVAHAAAAQFLDVEFNFARHPFIHTISLLDSILNKAVREDAMVFSTFVNPELNQYAADFCNQNTLKYLDVLTPAVNLFAEKTNLAPENKPGRTHSLNAKYFDKISAMEFAVTYDDGKDPAGFLKADIVLLGVSRTSKTPLSLYLANKGYKVANLPLVPQTQIPDEIWQVDSNKIFGLTTTKEVLNNIRRQRMIAYGLNPESSYSNMDSINKELQSADELFKKIGCLVINTANKSIEETATIIMESLV.

153 to 160 (GVSRTSKT) contacts ADP.

The protein belongs to the pyruvate, phosphate/water dikinase regulatory protein family. PDRP subfamily.

It carries out the reaction N(tele)-phospho-L-histidyl/L-threonyl-[pyruvate, phosphate dikinase] + ADP = N(tele)-phospho-L-histidyl/O-phospho-L-threonyl-[pyruvate, phosphate dikinase] + AMP + H(+). The enzyme catalyses N(tele)-phospho-L-histidyl/O-phospho-L-threonyl-[pyruvate, phosphate dikinase] + phosphate + H(+) = N(tele)-phospho-L-histidyl/L-threonyl-[pyruvate, phosphate dikinase] + diphosphate. Bifunctional serine/threonine kinase and phosphorylase involved in the regulation of the pyruvate, phosphate dikinase (PPDK) by catalyzing its phosphorylation/dephosphorylation. This chain is Putative pyruvate, phosphate dikinase regulatory protein, found in Pediococcus pentosaceus (strain ATCC 25745 / CCUG 21536 / LMG 10740 / 183-1w).